Consider the following 234-residue polypeptide: Ribosome-inactivating protein lychnin (234 aa).

C32 and C115 are joined by a disulfide. E170 is an active-site residue.

In terms of assembly, monomer.

The catalysed reaction is Endohydrolysis of the N-glycosidic bond at one specific adenosine on the 28S rRNA.. Ribosome-inactivating protein of type 1, inhibits protein synthesis in animal cells. Inhibits cell-free translation in rabbit reticulocyte lysate system with an IC(50) of 0.17 nM. The chain is Ribosome-inactivating protein lychnin from Silene chalcedonica (Maltese-cross).